The following is a 239-amino-acid chain: Ribosomal RNA small subunit methyltransferase G (239 aa).

S-adenosyl-L-methionine contacts are provided by residues Gly-79, Phe-84, Ala-130–Glu-131, and Arg-149.

The protein belongs to the methyltransferase superfamily. RNA methyltransferase RsmG family.

It localises to the cytoplasm. Its function is as follows. Specifically methylates the N7 position of a guanine in 16S rRNA. The sequence is that of Ribosomal RNA small subunit methyltransferase G from Lactobacillus johnsonii (strain CNCM I-12250 / La1 / NCC 533).